The sequence spans 152 residues: NAD(P)H-quinone oxidoreductase subunit N (152 aa).

The protein belongs to the complex I NdhN subunit family. NDH-1 can be composed of about 15 different subunits; different subcomplexes with different compositions have been identified which probably have different functions.

It is found in the cellular thylakoid membrane. The enzyme catalyses a plastoquinone + NADH + (n+1) H(+)(in) = a plastoquinol + NAD(+) + n H(+)(out). It catalyses the reaction a plastoquinone + NADPH + (n+1) H(+)(in) = a plastoquinol + NADP(+) + n H(+)(out). Functionally, NDH-1 shuttles electrons from an unknown electron donor, via FMN and iron-sulfur (Fe-S) centers, to quinones in the respiratory and/or the photosynthetic chain. The immediate electron acceptor for the enzyme in this species is believed to be plastoquinone. Couples the redox reaction to proton translocation, and thus conserves the redox energy in a proton gradient. Cyanobacterial NDH-1 also plays a role in inorganic carbon-concentration. The protein is NAD(P)H-quinone oxidoreductase subunit N of Prochlorococcus marinus (strain SARG / CCMP1375 / SS120).